A 259-amino-acid chain; its full sequence is 4-hydroxy-tetrahydrodipicolinate reductase (259 aa).

G9–M14 is a binding site for NAD(+). Residue R37 coordinates NADP(+). Residues G92–T94 and A116–M119 contribute to the NAD(+) site. Catalysis depends on H149, which acts as the Proton donor/acceptor. H150 provides a ligand contact to (S)-2,3,4,5-tetrahydrodipicolinate. K153 acts as the Proton donor in catalysis. G159–T160 contributes to the (S)-2,3,4,5-tetrahydrodipicolinate binding site.

Belongs to the DapB family.

It is found in the cytoplasm. The enzyme catalyses (S)-2,3,4,5-tetrahydrodipicolinate + NAD(+) + H2O = (2S,4S)-4-hydroxy-2,3,4,5-tetrahydrodipicolinate + NADH + H(+). It carries out the reaction (S)-2,3,4,5-tetrahydrodipicolinate + NADP(+) + H2O = (2S,4S)-4-hydroxy-2,3,4,5-tetrahydrodipicolinate + NADPH + H(+). It participates in amino-acid biosynthesis; L-lysine biosynthesis via DAP pathway; (S)-tetrahydrodipicolinate from L-aspartate: step 4/4. Its function is as follows. Catalyzes the conversion of 4-hydroxy-tetrahydrodipicolinate (HTPA) to tetrahydrodipicolinate. This chain is 4-hydroxy-tetrahydrodipicolinate reductase, found in Desulfovibrio desulfuricans (strain ATCC 27774 / DSM 6949 / MB).